Consider the following 410-residue polypeptide: Protein disulfide isomerase CRELD1 (410 aa).

The first 29 residues, 1–29 (MGMSRRMFLTVYGSLWLLLLLSRPGVSKP), serve as a signal peptide directing secretion. Topologically, residues 30-352 (QLCQTCQNLV…GLFDDITDDE (323 aa)) are extracellular. Positions 32 to 35 (CQTC) match the CXXC motif. Intrachain disulfides connect Cys-32–Cys-35, Cys-141–Cys-155, Cys-149–Cys-167, and Cys-169–Cys-178. One can recognise an EGF-like 1 domain in the interval 139–179 (LSCPGGTEKPCSGNGQCNGDGTRFGTGVCDCYTSYGGPVCM). FU repeat units lie at residues 194-243 (HLVC…DHCK) and 254-301 (SYEC…ELPK). The CXXC signature appears at 264–267 (CIGC). 4 disulfides stabilise this stretch: Cys-264-Cys-267, Cys-295-Cys-309, Cys-302-Cys-318, and Cys-320-Cys-331. The region spanning 291-332 (DVDECDSELPKCKGSHEECVNTEGSFTCVCEKDYSRIDGMCR) is the EGF-like 2; calcium-binding domain. A helical membrane pass occupies residues 353-373 (VVVLQQMFFGVVICALATLAA). Lys-374 is a topological domain (cytoplasmic). A helical transmembrane segment spans residues 375–395 (GDMVFTAIFIGAVAAMAGYWL). Topologically, residues 396–410 (SEKGDRALDSFMKGR) are extracellular.

The protein belongs to the CRELD family.

The protein localises to the membrane. The enzyme catalyses Catalyzes the rearrangement of -S-S- bonds in proteins.. In terms of biological role, protein disulfide isomerase. Promotes the localization of acetylcholine receptors (AChRs) to the plasma membrane. This is Protein disulfide isomerase CRELD1 (creld1) from Xenopus tropicalis (Western clawed frog).